The primary structure comprises 214 residues: Epoxide hydrolase EphH (214 aa).

Serine 28 serves as the catalytic Nucleophile. Active-site charge relay system residues include aspartate 156 and histidine 186.

Belongs to the AB hydrolase superfamily.

It carries out the reaction an epoxide + H2O = an ethanediol. With respect to regulation, inhibited by AUDA, a known epoxide hydrolase inhibitor. Catalyzes the hydrolysis of epoxide-containing substrates. In vitro, catalyzes the hydrolysis of the synthetic compounds PHOME and styrene oxide. Plays an essential role in subverting phagosomal acidification. Plays a major role in the survival of M.tuberculosis (Mtb) during in vitro acidic stress and protects Mtb in response to phagosomal acidification inside macrophages. Also supports Mtb growth under the nutrient-deprived condition at pH 7.0. The polypeptide is Epoxide hydrolase EphH (Mycobacterium tuberculosis (strain ATCC 25618 / H37Rv)).